The chain runs to 465 residues: Dihydrolipoyl dehydrogenase (465 aa).

FAD-binding positions include 34-42, Lys-51, and Gly-114; that span reads EKREAGGTC. Cys-42 and Cys-47 are disulfide-bonded. Residues 180–184, Glu-203, Val-237, and 264–267 contribute to the NAD(+) site; these read GGGVI and SIGR. FAD-binding residues include Asp-307 and Ala-315. The Proton acceptor role is filled by His-439.

This sequence belongs to the class-I pyridine nucleotide-disulfide oxidoreductase family. FAD serves as cofactor.

The protein localises to the cytoplasm. It carries out the reaction N(6)-[(R)-dihydrolipoyl]-L-lysyl-[protein] + NAD(+) = N(6)-[(R)-lipoyl]-L-lysyl-[protein] + NADH + H(+). Functionally, the branched-chain alpha-keto dehydrogenase complex catalyzes the overall conversion of alpha-keto acids to acyl-CoA and CO(2). It contains multiple copies of 3 enzymatic components: branched-chain alpha-keto acid decarboxylase (E1), lipoamide acyltransferase (E2) and lipoamide dehydrogenase (E3). The polypeptide is Dihydrolipoyl dehydrogenase (lpdA) (Chlamydia trachomatis serovar D (strain ATCC VR-885 / DSM 19411 / UW-3/Cx)).